A 107-amino-acid polypeptide reads, in one-letter code: UPF0473 protein llmg_0152 (107 aa).

The protein belongs to the UPF0473 family.

The chain is UPF0473 protein llmg_0152 from Lactococcus lactis subsp. cremoris (strain MG1363).